We begin with the raw amino-acid sequence, 278 residues long: Extracellular metalloprotease GLRG_06511 (278 aa).

Residues M1–A19 form the signal peptide. N51 carries an N-linked (GlcNAc...) asparagine glycan. A Zn(2+)-binding site is contributed by H190. E191 is an active-site residue. H194 contributes to the Zn(2+) binding site. A disulfide bridge links C227 with C254.

Belongs to the peptidase M43B family.

It is found in the secreted. Functionally, secreted metalloproteinase that allows assimilation of proteinaceous substrates. The chain is Extracellular metalloprotease GLRG_06511 from Colletotrichum graminicola (strain M1.001 / M2 / FGSC 10212) (Maize anthracnose fungus).